The sequence spans 299 residues: MYFPIVALIGRYQDTGLDAPLTALAQMLTQAGRRVLVEAETARNAGVSGYPVADWDEIGRTATLAVVMGGDGTVLGAARHLAPYGVPLIGINHGRLGFITDIPLQDAHDALGRVLEGNYQAEDRMLLQGGVWRGEQQMYSASAVNDVVLNRAGRGGMIEVRVELDGAFMYTQRADGLIIATPTGSTAYSLSANGPILHPGMNAMVLVPVAPQTLSNRPIVIPDSGVLNMTLTAMGRVEIGASVHFDMQTWSDLQPGDRITVQRAPHIIRFVHPEGYSFFSTLRRKLHWNLMPQATDNLE.

Aspartate 71 serves as the catalytic Proton acceptor. NAD(+) is bound by residues 71-72 (DG), 145-146 (ND), arginine 173, aspartate 175, 186-191 (TAYSLS), alanine 210, and glutamine 248.

Belongs to the NAD kinase family. The cofactor is a divalent metal cation.

The protein resides in the cytoplasm. It catalyses the reaction NAD(+) + ATP = ADP + NADP(+) + H(+). In terms of biological role, involved in the regulation of the intracellular balance of NAD and NADP, and is a key enzyme in the biosynthesis of NADP. Catalyzes specifically the phosphorylation on 2'-hydroxyl of the adenosine moiety of NAD to yield NADP. The sequence is that of NAD kinase from Bordetella pertussis (strain Tohama I / ATCC BAA-589 / NCTC 13251).